The sequence spans 121 residues: MKSALHESRADTAEGTSSASSAWKSVRALPARTLIFFIELYRTYVSPLRMPTCRFMPTCSEYAVESLRTHGTIKGLLLTVVRLAKCAPWHPGGWDPVPARHDRHAGSRRCCPANVDEQRST.

This sequence belongs to the UPF0161 family.

The protein resides in the cell membrane. Could be involved in insertion of integral membrane proteins into the membrane. The protein is Putative membrane protein insertion efficiency factor of Rhodococcus opacus (strain B4).